The sequence spans 442 residues: Exodeoxyribonuclease 7 large subunit (442 aa).

This sequence belongs to the XseA family. In terms of assembly, heterooligomer composed of large and small subunits.

It is found in the cytoplasm. The catalysed reaction is Exonucleolytic cleavage in either 5'- to 3'- or 3'- to 5'-direction to yield nucleoside 5'-phosphates.. Its function is as follows. Bidirectionally degrades single-stranded DNA into large acid-insoluble oligonucleotides, which are then degraded further into small acid-soluble oligonucleotides. The sequence is that of Exodeoxyribonuclease 7 large subunit from Shewanella loihica (strain ATCC BAA-1088 / PV-4).